Consider the following 142-residue polypeptide: FAD synthase (142 aa).

ATP contacts are provided by residues 9 to 10, 14 to 17, and Asp92; these read TF and HPGH.

The protein belongs to the archaeal FAD synthase family. In terms of assembly, homodimer. A divalent metal cation serves as cofactor.

The catalysed reaction is FMN + ATP + H(+) = FAD + diphosphate. It functions in the pathway cofactor biosynthesis; FAD biosynthesis; FAD from FMN: step 1/1. Catalyzes the transfer of the AMP portion of ATP to flavin mononucleotide (FMN) to produce flavin adenine dinucleotide (FAD) coenzyme. The chain is FAD synthase from Halalkalicoccus jeotgali (strain DSM 18796 / CECT 7217 / JCM 14584 / KCTC 4019 / B3).